A 288-amino-acid chain; its full sequence is NGG1-interacting factor 3 (288 aa).

This sequence belongs to the GTP cyclohydrolase I type 2/NIF3 family. May interact with NGG1.

Its subcellular location is the mitochondrion. The chain is NGG1-interacting factor 3 from Saccharomyces cerevisiae (strain ATCC 204508 / S288c) (Baker's yeast).